A 158-amino-acid chain; its full sequence is UPF0262 protein R00612 (158 aa).

This sequence belongs to the UPF0262 family.

The protein is UPF0262 protein R00612 of Rhizobium meliloti (strain 1021) (Ensifer meliloti).